The following is a 310-amino-acid chain: Protein-methionine-sulfoxide reductase catalytic subunit MsrP (310 aa).

The segment at residues 1 to 45 (MRKTSSPRIAPSEITPRDLYHDRRRFMQAAAGAAAAALWPHWLSA) is a signal peptide (tat-type signal). Residues asparagine 73, 76–77 (YE), cysteine 131, threonine 166, asparagine 214, arginine 219, and 230–232 (SAK) each bind Mo-molybdopterin.

The protein belongs to the MsrP family. Heterodimer of a catalytic subunit (MsrP) and a heme-binding subunit (MsrQ). It depends on Mo-molybdopterin as a cofactor. Post-translationally, predicted to be exported by the Tat system. The position of the signal peptide cleavage has not been experimentally proven.

The protein localises to the periplasm. It catalyses the reaction L-methionyl-[protein] + a quinone + H2O = L-methionyl-(S)-S-oxide-[protein] + a quinol. The enzyme catalyses L-methionyl-[protein] + a quinone + H2O = L-methionyl-(R)-S-oxide-[protein] + a quinol. In terms of biological role, part of the MsrPQ system that repairs oxidized periplasmic proteins containing methionine sulfoxide residues (Met-O), using respiratory chain electrons. Thus protects these proteins from oxidative-stress damage caused by reactive species of oxygen and chlorine generated by the host defense mechanisms. MsrPQ is essential for the maintenance of envelope integrity under bleach stress, rescuing a wide series of structurally unrelated periplasmic proteins from methionine oxidation. The catalytic subunit MsrP is non-stereospecific, being able to reduce both (R-) and (S-) diastereoisomers of methionine sulfoxide. This Methylococcus capsulatus (strain ATCC 33009 / NCIMB 11132 / Bath) protein is Protein-methionine-sulfoxide reductase catalytic subunit MsrP.